The primary structure comprises 172 residues: Small ribosomal subunit protein uS13 (172 aa).

Residues 131 to 172 (GQRTRTTGRTGVTVGVRRSKAAQAAQQQQKAQASSGGEKKQG) form a disordered region. Residues 134–163 (TRTTGRTGVTVGVRRSKAAQAAQQQQKAQA) show a composition bias toward low complexity.

The protein belongs to the universal ribosomal protein uS13 family. Part of the 30S ribosomal subunit. Forms a loose heterodimer with protein S19. Forms two bridges to the 50S subunit in the 70S ribosome.

In terms of biological role, located at the top of the head of the 30S subunit, it contacts several helices of the 16S rRNA. In the 70S ribosome it contacts the 23S rRNA (bridge B1a) and protein L5 of the 50S subunit (bridge B1b), connecting the 2 subunits; these bridges are implicated in subunit movement. This chain is Small ribosomal subunit protein uS13, found in Sulfurisphaera tokodaii (strain DSM 16993 / JCM 10545 / NBRC 100140 / 7) (Sulfolobus tokodaii).